The following is a 247-amino-acid chain: Probable transcriptional regulatory protein Gura_1416 (247 aa).

This sequence belongs to the TACO1 family.

It localises to the cytoplasm. The protein is Probable transcriptional regulatory protein Gura_1416 of Geotalea uraniireducens (strain Rf4) (Geobacter uraniireducens).